We begin with the raw amino-acid sequence, 345 residues long: Protein RecA (345 aa).

Position 65-72 (G65–T72) interacts with ATP.

Belongs to the RecA family.

Its subcellular location is the cytoplasm. Its function is as follows. Can catalyze the hydrolysis of ATP in the presence of single-stranded DNA, the ATP-dependent uptake of single-stranded DNA by duplex DNA, and the ATP-dependent hybridization of homologous single-stranded DNAs. It interacts with LexA causing its activation and leading to its autocatalytic cleavage. The polypeptide is Protein RecA (Sulfurimonas denitrificans (strain ATCC 33889 / DSM 1251) (Thiomicrospira denitrificans (strain ATCC 33889 / DSM 1251))).